Consider the following 252-residue polypeptide: 5'-nucleotidase SurE (252 aa).

A divalent metal cation contacts are provided by Asp8, Asp9, Ser39, and Asn91.

Belongs to the SurE nucleotidase family. Requires a divalent metal cation as cofactor.

The protein localises to the cytoplasm. The catalysed reaction is a ribonucleoside 5'-phosphate + H2O = a ribonucleoside + phosphate. Its function is as follows. Nucleotidase that shows phosphatase activity on nucleoside 5'-monophosphates. In Gemmatimonas aurantiaca (strain DSM 14586 / JCM 11422 / NBRC 100505 / T-27), this protein is 5'-nucleotidase SurE.